Reading from the N-terminus, the 140-residue chain is Small ribosomal subunit protein uS12 (140 aa).

2 disordered regions span residues 1–20 (MPTINQLVRKGRKSKVVKSD) and 35–55 (QTNVSSPQKRGVCTRVGTMTP). The residue at position 102 (aspartate 102) is a 3-methylthioaspartic acid. Positions 121–140 (DGRMQGRSKYGTKRPKAAKK) are disordered. Residues 130-140 (YGTKRPKAAKK) are compositionally biased toward basic residues.

The protein belongs to the universal ribosomal protein uS12 family. As to quaternary structure, part of the 30S ribosomal subunit. Contacts proteins S8 and S17. May interact with IF1 in the 30S initiation complex.

In terms of biological role, with S4 and S5 plays an important role in translational accuracy. Its function is as follows. Interacts with and stabilizes bases of the 16S rRNA that are involved in tRNA selection in the A site and with the mRNA backbone. Located at the interface of the 30S and 50S subunits, it traverses the body of the 30S subunit contacting proteins on the other side and probably holding the rRNA structure together. The combined cluster of proteins S8, S12 and S17 appears to hold together the shoulder and platform of the 30S subunit. The protein is Small ribosomal subunit protein uS12 of Exiguobacterium sp. (strain ATCC BAA-1283 / AT1b).